The chain runs to 221 residues: UPF0502 protein Sputcn32_1644 (221 aa).

The protein belongs to the UPF0502 family.

This Shewanella putrefaciens (strain CN-32 / ATCC BAA-453) protein is UPF0502 protein Sputcn32_1644.